The chain runs to 334 residues: Tryptophan--tRNA ligase (334 aa).

Residues 11 to 13 (QPT) and 19 to 20 (GN) contribute to the ATP site. The short motif at 12–20 (PTGKLTIGN) is the 'HIGH' region element. Residue D135 participates in L-tryptophan binding. ATP-binding positions include 147–149 (GED), I186, and 195–199 (KMSKS). Positions 195 to 199 (KMSKS) match the 'KMSKS' region motif.

This sequence belongs to the class-I aminoacyl-tRNA synthetase family. Homodimer.

It is found in the cytoplasm. It catalyses the reaction tRNA(Trp) + L-tryptophan + ATP = L-tryptophyl-tRNA(Trp) + AMP + diphosphate + H(+). Functionally, catalyzes the attachment of tryptophan to tRNA(Trp). In Blochmanniella floridana, this protein is Tryptophan--tRNA ligase.